The chain runs to 141 residues: Hemoglobin subunit alpha (141 aa).

The Globin domain occupies 1-141; the sequence is VLSAADKGNV…VSTVLTSKYR (141 aa). Ser-3 carries the post-translational modification Phosphoserine. N6-succinyllysine is present on residues Lys-7 and Lys-11. Lys-16 is subject to N6-acetyllysine; alternate. Lys-16 bears the N6-succinyllysine; alternate mark. Tyr-24 is subject to Phosphotyrosine. Ser-35 is subject to Phosphoserine. Position 40 is an N6-succinyllysine (Lys-40). O2 is bound at residue His-58. His-87 is a heme b binding site. Ser-102 bears the Phosphoserine mark. Phosphothreonine is present on Thr-108. 2 positions are modified to phosphoserine: Ser-124 and Ser-131. 2 positions are modified to phosphothreonine: Thr-134 and Thr-137. A Phosphoserine modification is found at Ser-138.

It belongs to the globin family. Heterotetramer of two alpha chains and two beta chains. In terms of tissue distribution, red blood cells.

In terms of biological role, involved in oxygen transport from the lung to the various peripheral tissues. Functionally, hemopressin acts as an antagonist peptide of the cannabinoid receptor CNR1. Hemopressin-binding efficiently blocks cannabinoid receptor CNR1 and subsequent signaling. This is Hemoglobin subunit alpha (HBA) from Macrotus californicus (Californian leaf-nosed bat).